The sequence spans 1158 residues: Voltage-gated inwardly rectifying potassium channel KCNH2 (1158 aa).

At 1 to 402 the chain is on the cytoplasmic side; sequence MPVRRGHVAP…RIHRWTILHY (402 aa). Positions 17 to 88 constitute a PAS domain; the sequence is TIIRKFEGQS…AAQIAQALLG (72 aa). The PAC domain maps to 92-144; it reads RKVEIAFYRKDGSCFLCLVDVVPVKNEDGAVIMFILNFEVVMEKDMVGSPTHD. A disordered region spans residues 232-314; that stretch reads RALVGSSSPP…GAMHPLRGGL (83 aa). S239 carries the post-translational modification Phosphoserine. A compositionally biased stretch (polar residues) spans 258 to 269; sequence PDASGSSCSLAR. S283, S284, S319, and S350 each carry phosphoserine. A helical transmembrane segment spans residues 403–423; sequence SPFKAVWDWLILLLVIYTAVF. The Extracellular segment spans residues 424–449; that stretch reads TPYSAAFLLKETEEGPPAPDCGYACQ. The chain crosses the membrane as a helical span at residues 450–470; that stretch reads PLAVVDFIVDIMFIVDILINF. Over 471 to 494 the chain is Cytoplasmic; the sequence is RTTYVNANEEVVSHPGRIAVHYFK. A helical transmembrane segment spans residues 495 to 515; the sequence is GWFLIDMVAAIPFDLLIFGSG. The Extracellular portion of the chain corresponds to 516–519; sequence SEEL. Residues 520-540 form a helical; Voltage-sensor membrane-spanning segment; it reads IGLLKTARLLRLVRVARKLDR. Residues 541–546 lie on the Cytoplasmic side of the membrane; it reads YSEYGA. Residues 547–567 form a helical membrane-spanning segment; it reads AVLFLLMCTFALIAHWLACIW. Topologically, residues 568-610 are extracellular; it reads YAIGNMEQPHMDSRIGWLHNLGDQIGKPYNSSGLGGPSIKDKY. N-linked (GlcNAc...) asparagine glycosylation occurs at N597. Positions 611 to 631 form an intramembrane region, pore-forming; it reads VTALYFTFSSLTSVGFGNVSP. The Selectivity filter signature appears at 623–628; that stretch reads SVGFGN. At 632 to 637 the chain is on the extracellular side; it reads NTNSEK. Residues 638 to 658 traverse the membrane as a helical segment; it reads IFSICVMLIGSLMYASIFGNV. Residues 659–1158 are Cytoplasmic-facing; sequence SAIIQRLYSG…LHRHGSDPGS (500 aa). The segment at 741 to 841 is cNMP-binding domain; the sequence is PFRGATKGCL…IHRDDLLEVL (101 aa). Residues 869 to 987 form a disordered region; that stretch reads GSPGSAELEG…KSSDTCNPLS (119 aa). Residues S870 and S873 each carry the phosphoserine modification. Residues 882–891 show a composition bias toward basic residues; that stretch reads RQRKRKLSFR. The segment covering 910–926 has biased composition (gly residues); it reads GRAGAGPSGRGRPGGPW. Residues 927–938 show a composition bias toward low complexity; sequence GESPSSGPSSPE. Residues 959–969 are compositionally biased toward pro residues; that stretch reads SPRPPGEPPGG. An Omega-N-methylarginine modification is found at R1013. Residues 1034 to 1061 adopt a coiled-coil conformation; sequence RGDVEGRLDALQRQLNRLETRLSADMAT. Residues 1116–1158 are disordered; it reads FEELPPGAPELPQDGPPRRLSLPGQLGALTSQPLHRHGSDPGS. The residue at position 1136 (S1136) is a Phosphoserine.

It belongs to the potassium channel family. H (Eag) (TC 1.A.1.20) subfamily. Kv11.1/KCNH2 sub-subfamily. In terms of assembly, the potassium channel is probably composed of a homo- or heterotetrameric complex of pore-forming alpha subunits that can associate with modulating beta subunits. Interacts with DNAJB12 and DNAJB14; chaperones DNAJB12 and DNAJB14 promote tetramerization. Heteromultimer with KCNH6/ERG2 and KCNH7/ERG3. Interacts with ALG10B. Forms a stable complex with KCNE1 or KCNE2, and that this heteromultimerization regulates Inward rectifier potassium channel activity. Interacts with CANX. The core-glycosylated, but not the fully glycosylated form interacts with RNF207. Interacts with NDFIP1 and NDFIP2; this interaction decreases the cell membrane expression by targeting KCNH2, through interaction with NEDD4L, for the degradation through the multivesicular bodies (MVBs)-lysosomal pathway. Phosphorylated on serine and threonine residues. Phosphorylation by PKA inhibits ion conduction. As to expression, highly expressed in left and right atria of the heart, in cortex and hippocampus; detected at intermediate levels in left and right ventricle, Purkinje fibers, cerebellum, thalamus and basal ganglia; detected at low levels in liver, spleen and kidney.

It localises to the cell membrane. The catalysed reaction is K(+)(in) = K(+)(out). In terms of biological role, pore-forming (alpha) subunit of voltage-gated inwardly rectifying potassium channel. Characterized by unusual gating kinetics by producing relatively small outward currents during membrane depolarization and large inward currents during subsequent repolarization which reflect a rapid inactivation during depolarization and quick recovery from inactivation but slow deactivation (closing) during repolarization. Channel properties are modulated by cAMP and subunit assembly. Forms a stable complex with KCNE1 or KCNE2, and that this heteromultimerization regulates inward rectifier potassium channel activity. This is Voltage-gated inwardly rectifying potassium channel KCNH2 from Canis lupus familiaris (Dog).